The following is a 454-amino-acid chain: Isthmin-1 (454 aa).

Positions 1 to 29 are cleaved as a signal peptide; it reads MVRLAAELLLLLGLLLLTLHITVLRGSGA. Disordered stretches follow at residues 29 to 93, 125 to 144, and 161 to 209; these read ASDR…PRSF, PDSEAEKDQHPENKPSWSLP, and TNSG…STDG. The span at 38 to 55 shows a compositional bias: polar residues; the sequence is GNNNLNLESDSTSETSFP. Residues 128-137 are compositionally biased toward basic and acidic residues; that stretch reads EAEKDQHPEN. Residues 208 to 252 enclose the TSP type-1 domain; sequence DGEGDWSLWSVCSVTCGNGNQKRTRSCGYACIATESRTCDRPNCP. 3 disulfides stabilise this stretch: Cys-219–Cys-246, Cys-223–Cys-251, and Cys-234–Cys-238. The AMOP domain occupies 279–442; it reads LFEVDMDSCE…QKCTESPSDE (164 aa).

The protein belongs to the isthmin family. As to quaternary structure, interacts with integrin ITGAV/ITGB5.

The protein localises to the secreted. Acts as an angiogenesis inhibitor. This chain is Isthmin-1 (Ism1), found in Mus musculus (Mouse).